The chain runs to 317 residues: MCCTSGCALTIRLLGRTEIRRLAKELDFRPRKSLGQNFVHDANTVRRVVAASGVSRSDLVLEVGPGLGSLTLALLDRGATVTAVEIDPLLASRLQQTVAEHSHSEVHRLTVVNRDVLALRREDLAAAPTAVVANLPYNVAVPALLHLLVEFPSIRVVTVMVQAEVAERLAAEPGSKEYGVPSVKLRFFGRVRRCGMVSPTVFWPIPRVYSGLVRIDRYETSPWPTDDAFRRRVFELVDIAFAQRRKTSRNAFVQWAGSGSESANRLLAASIDPARRGETLSIDDFVRLLRRSGGSDEATSTGRDARAPDISGHASAS.

Residues Asn-37, Val-39, Gly-64, Glu-85, Asp-115, and Asn-134 each contribute to the S-adenosyl-L-methionine site. A disordered region spans residues 293–317; it reads GGSDEATSTGRDARAPDISGHASAS.

The protein belongs to the class I-like SAM-binding methyltransferase superfamily. rRNA adenine N(6)-methyltransferase family. RsmA subfamily.

Its subcellular location is the cytoplasm. The enzyme catalyses adenosine(1518)/adenosine(1519) in 16S rRNA + 4 S-adenosyl-L-methionine = N(6)-dimethyladenosine(1518)/N(6)-dimethyladenosine(1519) in 16S rRNA + 4 S-adenosyl-L-homocysteine + 4 H(+). Specifically dimethylates two adjacent adenosines (A1518 and A1519) in the loop of a conserved hairpin near the 3'-end of 16S rRNA in the 30S particle. May play a critical role in biogenesis of 30S subunits. The protein is Ribosomal RNA small subunit methyltransferase A of Mycobacterium bovis (strain BCG / Tokyo 172 / ATCC 35737 / TMC 1019).